Consider the following 468-residue polypeptide: MDFGLQPPEITSGEMYLGPGAGPMLAAAVAWDGLAAELQSMAASYASIVEGMASESWLGPSSAGMAAAAAPYVTWMSGTSAQAKAAADQARAAVVAYETAFAAVVPPPQIAANRSQLISLVATNIFGQNTAAIAATEAEYGEMWAQDTMAMFGYASSSATASRLTPFTAPPQTTNPSGLAGQAAATGQATALASGTNAVTTALSSAAAQFPFDIIPTLLQGLATLSTQYTQLMGQLINAIFGPTGATTYQNVFVTAANVTKFSTWANDAMSAPNLGMTEFKVFWQPPPAPEIPKSSLGAGLGLRSGLSAGLAHAASAGLGQANLVGDLSVPPSWASATPAVRLVANTLPATSLAAAPATQIPANLLGQMALGSMTGGALGAAAPAIYTGSGARARANGGTPSAEPVKLEAVIAQLQKQPDAVRHWNVDKADLDGLLDRLSKQPGIHAVHVSNGDKPKVALPDTQLGSH.

The tract at residues 447–468 (AVHVSNGDKPKVALPDTQLGSH) is disordered.

This sequence belongs to the mycobacterial PPE family.

This is an uncharacterized protein from Mycobacterium tuberculosis (strain ATCC 25618 / H37Rv).